A 427-amino-acid chain; its full sequence is 3-phosphoshikimate 1-carboxyvinyltransferase (427 aa).

3-phosphoshikimate contacts are provided by lysine 22, serine 23, and arginine 27. Lysine 22 provides a ligand contact to phosphoenolpyruvate. Glycine 97 and arginine 125 together coordinate phosphoenolpyruvate. 3-phosphoshikimate is bound by residues serine 171, serine 172, glutamine 173, serine 199, aspartate 315, asparagine 338, and lysine 342. Glutamine 173 provides a ligand contact to phosphoenolpyruvate. Residue aspartate 315 is the Proton acceptor of the active site. Arginine 346, arginine 388, and lysine 413 together coordinate phosphoenolpyruvate.

This sequence belongs to the EPSP synthase family. In terms of assembly, monomer.

The protein resides in the cytoplasm. The catalysed reaction is 3-phosphoshikimate + phosphoenolpyruvate = 5-O-(1-carboxyvinyl)-3-phosphoshikimate + phosphate. Its pathway is metabolic intermediate biosynthesis; chorismate biosynthesis; chorismate from D-erythrose 4-phosphate and phosphoenolpyruvate: step 6/7. Catalyzes the transfer of the enolpyruvyl moiety of phosphoenolpyruvate (PEP) to the 5-hydroxyl of shikimate-3-phosphate (S3P) to produce enolpyruvyl shikimate-3-phosphate and inorganic phosphate. The chain is 3-phosphoshikimate 1-carboxyvinyltransferase from Aliivibrio salmonicida (strain LFI1238) (Vibrio salmonicida (strain LFI1238)).